The primary structure comprises 173 residues: HTH-type transcriptional regulator IscR (173 aa).

The 130-residue stretch at 2–131 (RLTSKGRYAV…NNITLGELMM (130 aa)) folds into the HTH rrf2-type domain. Positions 28 to 51 (LADISERQGISLSYLEQLFSKLRK) form a DNA-binding region, H-T-H motif. The [2Fe-2S] cluster site is built by C92, C98, and C104.

It depends on [2Fe-2S] cluster as a cofactor.

Functionally, regulates the transcription of several operons and genes involved in the biogenesis of Fe-S clusters and Fe-S-containing proteins. This is HTH-type transcriptional regulator IscR from Vibrio cholerae serotype O1 (strain ATCC 39315 / El Tor Inaba N16961).